The primary structure comprises 438 residues: sn-glycerol-3-phosphate-binding periplasmic protein UgpB (438 aa).

An N-terminal signal peptide occupies residues 1–23; sequence MISLRHTALGLALSLAFTGQALA. 7 residues coordinate sn-glycerol 3-phosphate: Tyr-65, Glu-89, Ser-144, Ser-270, Gly-307, Tyr-346, and Arg-397.

This sequence belongs to the bacterial solute-binding protein 1 family. As to quaternary structure, the complex is composed of two ATP-binding proteins (UgpC), two transmembrane proteins (UgpA and UgpE) and a solute-binding protein (UgpB).

The protein resides in the periplasm. In terms of biological role, part of the ABC transporter complex UgpBAEC involved in sn-glycerol-3-phosphate (G3P) import. Binds G3P. The protein is sn-glycerol-3-phosphate-binding periplasmic protein UgpB (ugpB) of Salmonella paratyphi A (strain ATCC 9150 / SARB42).